A 256-amino-acid chain; its full sequence is Capsid protein (256 aa).

Positions 3-20 (KRPADIVISTPASKVRRK) match the Bipartite nuclear localization signal motif. Positions 40–54 (RRRTWVNRPMYRKPM) match the Nuclear localization signal motif. A zinc finger spans residues 68-85 (CEGPCKVQSYEQRHDVAH). Positions 101–122 (ITHRTGKRFCIKSIYVLGKIWM) match the Nuclear export signal motif. Positions 200 to 247 (NRFYKIYNHCTYNHQEAAKYENHTENALLLYMACTHASNPVYATLKIR) match the Bipartite nuclear localization signal motif.

The protein belongs to the geminiviridae capsid protein family. Homomultimer. Binds to single-stranded and double-stranded viral DNA. Interacts (via nuclear localization signals) with host importin alpha-1a.

It localises to the virion. It is found in the host nucleus. Functionally, encapsidates the viral genome into characteristic twinned ('geminate') particles. Binds the genomic viral ssDNA and shuttles it into and out of the cell nucleus. Plays a role in protection of the genome from degradation, virus acquisition and transmission by insect vectors, infectivity, and systemic movement. The CP of monopartite geminiviruses is absolutely essential for virus movement. This chain is Capsid protein, found in Tomato leaf curl virus (strain Australia) (ToLCV).